Here is a 519-residue protein sequence, read N- to C-terminus: F-box-like/WD repeat-containing protein TBL1XR1-A (519 aa).

Positions 4-36 (SSDEVNFLVYRYLQESGFSHSAFTFGIESHISQ) constitute a LisH domain. One can recognise an F-box-like domain in the interval 41–86 (GALAPPAALISIIQKGLQYVEAEVSINEDGTLFDGRPIESLSLIDA). A compositionally biased stretch (low complexity) spans 115 to 139 (AAAAAATPNNQQPPAKNGENTANGE). The disordered stretch occupies residues 115 to 147 (AAAAAATPNNQQPPAKNGENTANGEENGGHALA). WD repeat units lie at residues 172–211 (GHES…TSGS), 228–267 (PSNK…ASTL), 269–308 (QHKG…AKQQ), 311–349 (FHSA…PIKT), 352–391 (GHTN…CVHD), 394–442 (AHNK…CIHT), 445–484 (KHQE…LVHS), and 486–519 (RGTG…DLRK).

It belongs to the WD repeat EBI family. Interacts with heterodimers of rxra and thrb, and this interaction is abrogated by thyroid hormone binding to thrb. Interacts with ncor1.

Its subcellular location is the nucleus. Functionally, F-box-like protein which acts as an integral component of the N-CoR transcriptional corepressor complex. Probably regulates transcription activation mediated by nuclear receptors. May mediate the recruitment of the 19S proteasome complex, leading to the subsequent proteasomal degradation of the N-CoR complex, thereby allowing cofactor exchange and transcription activation. The polypeptide is F-box-like/WD repeat-containing protein TBL1XR1-A (tbl1xr1-a) (Xenopus laevis (African clawed frog)).